A 70-amino-acid polypeptide reads, in one-letter code: Small ribosomal subunit protein bS21 (70 aa).

This sequence belongs to the bacterial ribosomal protein bS21 family.

In Neisseria gonorrhoeae (strain ATCC 700825 / FA 1090), this protein is Small ribosomal subunit protein bS21.